A 174-amino-acid chain; its full sequence is Methylamine utilization protein MauL (174 aa).

It participates in one-carbon metabolism; methylamine degradation. Its function is as follows. Probably involved in TTQ prosthetic group biosynthesis. The protein is Methylamine utilization protein MauL (mauL) of Methylophilus methylotrophus (Bacterium W3A1).